We begin with the raw amino-acid sequence, 360 residues long: Peptide chain release factor 1 (360 aa).

Q237 is modified (N5-methylglutamine).

It belongs to the prokaryotic/mitochondrial release factor family. Methylated by PrmC. Methylation increases the termination efficiency of RF1.

It is found in the cytoplasm. Its function is as follows. Peptide chain release factor 1 directs the termination of translation in response to the peptide chain termination codons UAG and UAA. This Pseudomonas syringae pv. tomato (strain ATCC BAA-871 / DC3000) protein is Peptide chain release factor 1.